Here is a 637-residue protein sequence, read N- to C-terminus: Early transcription factor 70 kDa subunit (637 aa).

The 154-residue stretch at 32–185 (RTIIDENRSV…GHIIDLMSEE (154 aa)) folds into the Helicase ATP-binding domain. 45–52 (HIMGSGKT) is an ATP binding site. Residues 135–138 (DEAH) carry the DEXH box motif. The region spanning 327-507 (KFKYFINRIQ…VLPFDIKKLL (181 aa)) is the Helicase C-terminal domain.

Belongs to the helicase family. VETF subfamily. As to quaternary structure, heterodimer of a 70 kDa and a 82 kDa subunit. Part of the early transcription complex composed of ETF, RAP94/OPG109, and the DNA-directed RNA polymerase.

The protein resides in the virion. Acts with RNA polymerase to initiate transcription from early gene promoters. Is recruited by the RPO-associated protein of 94 kDa RAP94/OPG109 to form the early transcription complex, which also contains the core RNA polymerase. ETF heterodimer binds to early gene promoters. In Vaccinia virus (strain Ankara) (VACV), this protein is Early transcription factor 70 kDa subunit (OPG118).